The sequence spans 759 residues: Xaa-Pro dipeptidyl-peptidase (759 aa).

Catalysis depends on charge relay system residues S347, D467, and H497.

Belongs to the peptidase S15 family. Homodimer.

Its subcellular location is the cytoplasm. It carries out the reaction Hydrolyzes Xaa-Pro-|- bonds to release unblocked, N-terminal dipeptides from substrates including Ala-Pro-|-p-nitroanilide and (sequentially) Tyr-Pro-|-Phe-Pro-|-Gly-Pro-|-Ile.. Removes N-terminal dipeptides sequentially from polypeptides having unsubstituted N-termini provided that the penultimate residue is proline. In Streptococcus gordonii (strain Challis / ATCC 35105 / BCRC 15272 / CH1 / DL1 / V288), this protein is Xaa-Pro dipeptidyl-peptidase.